Reading from the N-terminus, the 522-residue chain is Glutamate--cysteine ligase, chloroplastic (522 aa).

Residues 1-45 (MALMSQAGSSHCIYSEKMKCISGHSSITSNMEMLKMKDICFGNIS) constitute a chloroplast transit peptide. The cysteines at positions 186 and 406 are disulfide-linked.

Belongs to the carboxylate-amine ligase family. Glutamate--cysteine ligase type 2 subfamily. Homodimer or monomer when oxidized or reduced, respectively. Post-translationally, the Cys-186-Cys-406 disulfide bridge is known to modulate the enzyme activity according to the redox status. The oxidized form constitutes the active enzyme.

Its subcellular location is the plastid. It localises to the chloroplast. The catalysed reaction is L-cysteine + L-glutamate + ATP = gamma-L-glutamyl-L-cysteine + ADP + phosphate + H(+). It functions in the pathway sulfur metabolism; glutathione biosynthesis; glutathione from L-cysteine and L-glutamate: step 1/2. The polypeptide is Glutamate--cysteine ligase, chloroplastic (GSH1) (Nicotiana tabacum (Common tobacco)).